A 91-amino-acid chain; its full sequence is Small ribosomal subunit protein bS16c (91 aa).

This sequence belongs to the bacterial ribosomal protein bS16 family.

Its subcellular location is the plastid. The protein localises to the chloroplast. The polypeptide is Small ribosomal subunit protein bS16c (Vitis vinifera (Grape)).